Here is a 200-residue protein sequence, read N- to C-terminus: Ribonuclease HII (200 aa).

Positions 14–200 (ERVAGLDEAG…HRQSFTLFRD (187 aa)) constitute an RNase H type-2 domain. A divalent metal cation contacts are provided by Asp-20, Glu-21, and Asp-112.

It belongs to the RNase HII family. Requires Mn(2+) as cofactor. Mg(2+) is required as a cofactor.

The protein localises to the cytoplasm. It carries out the reaction Endonucleolytic cleavage to 5'-phosphomonoester.. In terms of biological role, endonuclease that specifically degrades the RNA of RNA-DNA hybrids. This Salinibacter ruber (strain DSM 13855 / M31) protein is Ribonuclease HII.